The chain runs to 578 residues: Protein LIKE EARLY STARVATION, chloroplastic (578 aa).

The transit peptide at 1–56 (MALRLGVSIGAALGSSHWDDGQRVRQRDFSASVNFTAPVTSRRSLRGSRTGVRILR) directs the protein to the chloroplast. Disordered regions lie at residues 146–166 (NNSG…TSEV) and 187–206 (SETS…TPPQ).

This sequence belongs to the ESV1 family. In terms of tissue distribution, expressed ubiquitously.

The protein resides in the plastid. It is found in the chloroplast stroma. Its function is as follows. Binds preferentially to highly ordered alpha-glucans, such as starch and crystalline maltodextrins. Involved in the organization of the starch granule matrix, thus influencing starch turnover by modulating the accessibility of starch polymers to modifying and degrading enzymes involved in phosphorylation, hydrolyzes and synthesis, including starch synthases (SSI and SSIII), starch phosphorylases (PHS1), isoamylase, beta-amylase, glucan water dikinase (GWD) and phosphoglucan water dikinase (PWD). In Arabidopsis thaliana (Mouse-ear cress), this protein is Protein LIKE EARLY STARVATION, chloroplastic.